The sequence spans 157 residues: Small ribosomal subunit protein uS7 (157 aa).

Belongs to the universal ribosomal protein uS7 family. As to quaternary structure, part of the 30S ribosomal subunit. Contacts proteins S9 and S11.

Functionally, one of the primary rRNA binding proteins, it binds directly to 16S rRNA where it nucleates assembly of the head domain of the 30S subunit. Is located at the subunit interface close to the decoding center, probably blocks exit of the E-site tRNA. The protein is Small ribosomal subunit protein uS7 of Psychrobacter cryohalolentis (strain ATCC BAA-1226 / DSM 17306 / VKM B-2378 / K5).